The sequence spans 333 residues: F420-dependent glucose-6-phosphate dehydrogenase (333 aa).

Asp-37 is a binding site for coenzyme F420-(gamma-Glu)n. His-38 functions as the Proton donor in the catalytic mechanism. Coenzyme F420-(gamma-Glu)n contacts are provided by residues Thr-74 and 105 to 106 (SG). The active-site Proton acceptor is the Glu-107. Residues Asn-110, 174 to 175 (GG), and 177 to 178 (VV) contribute to the coenzyme F420-(gamma-Glu)n site. 4 residues coordinate substrate: Thr-192, Lys-195, Lys-256, and Arg-280.

The protein belongs to the F420-dependent glucose-6-phosphate dehydrogenase family. As to quaternary structure, homodimer.

It catalyses the reaction oxidized coenzyme F420-(gamma-L-Glu)(n) + D-glucose 6-phosphate + H(+) = 6-phospho-D-glucono-1,5-lactone + reduced coenzyme F420-(gamma-L-Glu)(n). Catalyzes the coenzyme F420-dependent oxidation of glucose 6-phosphate (G6P) to 6-phosphogluconolactone. This is F420-dependent glucose-6-phosphate dehydrogenase from Amycolatopsis mediterranei (strain U-32).